The sequence spans 425 residues: Orexin/Hypocretin receptor type 1 (425 aa).

A disordered region spans residues 1 to 25 (MEPSATPGPQMGVPTEGRERSPEPP). Topologically, residues 1-46 (MEPSATPGPQMGVPTEGRERSPEPPDYEDEFLRYLWRDYLYPKQYE) are extracellular. The required for response to orexin-A stretch occupies residues 26–41 (DYEDEFLRYLWRDYLY). A helical membrane pass occupies residues 47-67 (WVLIAAYVAVFFVALVGNTLV). Residues 68-82 (CLAVWRNHHMRTVTN) are Cytoplasmic-facing. A helical membrane pass occupies residues 83 to 105 (YFIVNLSLADVLVTAICLPASLL). At 106–119 (VDITESWLFGHALC) the chain is on the extracellular side. C119 and C202 form a disulfide bridge. A helical transmembrane segment spans residues 120–140 (KVIPYLQAVSVSVAVLTLSFI). At 141–160 (ALDRWYAICHPLLFKSTARR) the chain is on the cytoplasmic side. The helical transmembrane segment at 161 to 182 (ARGSILGIWAVSLAVMVPQAAV) threads the bilayer. Residues 183 to 213 (MECSSVLPELANRTRLFSVCDERWADDLYPK) lie on the Extracellular side of the membrane. An N-linked (GlcNAc...) asparagine glycan is attached at N194. The chain crosses the membrane as a helical span at residues 214-235 (IYHSCFFIVTYLAPLGLMAMAY). At 236 to 298 (FQIFRKLWGR…QMRARRKTAK (63 aa)) the chain is on the cytoplasmic side. The helical transmembrane segment at 299-321 (MLMVVLLVFALCYLPISVLNVLK) threads the bilayer. Over 322 to 336 (RVFGMFRQASDREAV) the chain is Extracellular. A helical membrane pass occupies residues 337–360 (YACFTFSHWLVYANSAANPIIYNF). Residues 361-425 (LSGKFREQFK…LLTSVTTVLP (65 aa)) are Cytoplasmic-facing.

This sequence belongs to the G-protein coupled receptor 1 family.

The protein localises to the cell membrane. Its function is as follows. Moderately selective excitatory receptor for orexin-A and, with a lower affinity, for orexin-B neuropeptide. Triggers an increase in cytoplasmic Ca(2+) levels in response to orexin-A binding. The protein is Orexin/Hypocretin receptor type 1 of Bos taurus (Bovine).